The chain runs to 339 residues: GTPase Obg (339 aa).

Residues Met-1–Leu-159 form the Obg domain. The tract at residues Asn-127–Gly-147 is disordered. One can recognise an OBG-type G domain in the interval Ala-160–Glu-333. GTP contacts are provided by residues Gly-166–Ser-173, Phe-191–Tyr-195, Asp-213–Gly-216, Asn-283–Asp-286, and Ser-314–Ile-316. 2 residues coordinate Mg(2+): Ser-173 and Thr-193.

Belongs to the TRAFAC class OBG-HflX-like GTPase superfamily. OBG GTPase family. In terms of assembly, monomer. It depends on Mg(2+) as a cofactor.

It localises to the cytoplasm. Functionally, an essential GTPase which binds GTP, GDP and possibly (p)ppGpp with moderate affinity, with high nucleotide exchange rates and a fairly low GTP hydrolysis rate. Plays a role in control of the cell cycle, stress response, ribosome biogenesis and in those bacteria that undergo differentiation, in morphogenesis control. In Coxiella burnetii (strain CbuG_Q212) (Coxiella burnetii (strain Q212)), this protein is GTPase Obg.